Here is a 707-residue protein sequence, read N- to C-terminus: Leukotoxin export ATP-binding protein LtxB (707 aa).

Positions 4 to 125 constitute a Peptidase C39 domain; it reads QKNTNLALQA…ERYQSKVILI (122 aa). His-83 is an active-site residue. 5 consecutive transmembrane segments (helical) span residues 158–178, 191–211, 269–289, 295–315, and 387–407; these read LIVS…FQVV, LNVI…LGGL, ALTS…MWYY, LVVL…SPIL, and AVMV…DLSI. The ABC transmembrane type-1 domain maps to 158 to 436; it reads LIVSIFLQIF…LAQIWQDFQQ (279 aa). An ABC transporter domain is found at 468–703; sequence ISFRNIKFRY…EKGLYSYLHQ (236 aa). Residue 502 to 509 participates in ATP binding; the sequence is GRSGSGKS.

The protein belongs to the ABC transporter superfamily. Protein-1 exporter (TC 3.A.1.109) family. Probably part of a complex composed of LtxB, LtxD and TdeA, which forms a single transport channel across the two membranes.

The protein resides in the cell inner membrane. It carries out the reaction ATP + H2O + proteinSide 1 = ADP + phosphate + proteinSide 2.. In terms of biological role, involved in the export of the LtxA leukotoxin. The polypeptide is Leukotoxin export ATP-binding protein LtxB (Aggregatibacter actinomycetemcomitans (Actinobacillus actinomycetemcomitans)).